A 759-amino-acid polypeptide reads, in one-letter code: Protein MTSS 1 (759 aa).

An IMD domain is found at 1 to 254; that stretch reads MEAVIEKECS…EQVILDLKGS (254 aa). Residues 108-157 are a coiled coil; sequence LQEQMEEWKKVANQLDKDHAKEYKKARQEIKNKSSDTLKLQKKAKKVDAQ. The tract at residues 259-309 is disordered; it reads SYQTPPSSPSTTMSRKSSVCSSLNSVNSSDSRSSGSHSHSPSSHYRYRSSN. A Phosphothreonine modification is found at Thr262. A phosphoserine mark is found at Ser265, Ser266, Ser275, and Ser326. The segment at 331–354 is disordered; the sequence is QDAFQSKSPSPMPPEAANQLSNGF. Thr429 carries the post-translational modification Phosphothreonine. Disordered regions lie at residues 431 to 472 and 569 to 759; these read QRRK…AATR and KRPA…PRFS. A Phosphothreonine modification is found at Thr607. Low complexity predominate over residues 612–627; that stretch reads PIPIKTPVIPVKTPTV. A phosphoserine mark is found at Ser648 and Ser651. Over residues 660–670 the composition is skewed to polar residues; sequence GVSNIPSSLWS. Positions 675–685 are enriched in pro residues; it reads VNPPLPGPKPS. The 18-residue stretch at 731 to 748 folds into the WH2 domain; sequence QGEDMLNAIRRGVKLKKT.

It belongs to the MTSS family. As to quaternary structure, binds to actin. Strongly expressed in the developing neurons and skeletal and cardiac muscles in embryos. Strongly expressed also in liver, outer layers of the kidney, and in the Purkinje cells of the brain.

It localises to the cytoplasm. It is found in the cytoskeleton. Inhibits the nucleation of actin filaments in vitro. The protein is Protein MTSS 1 of Mus musculus (Mouse).